We begin with the raw amino-acid sequence, 246 residues long: Type III pantothenate kinase (246 aa).

6–13 (DVGNTHSV) lines the ATP pocket. 103–106 (GADR) is a substrate binding site. The Proton acceptor role is filled by aspartate 105. K(+) is bound at residue aspartate 125. Threonine 128 is a binding site for ATP. Residue threonine 179 coordinates substrate.

This sequence belongs to the type III pantothenate kinase family. As to quaternary structure, homodimer. NH4(+) serves as cofactor. Requires K(+) as cofactor.

It is found in the cytoplasm. It carries out the reaction (R)-pantothenate + ATP = (R)-4'-phosphopantothenate + ADP + H(+). Its pathway is cofactor biosynthesis; coenzyme A biosynthesis; CoA from (R)-pantothenate: step 1/5. Catalyzes the phosphorylation of pantothenate (Pan), the first step in CoA biosynthesis. The protein is Type III pantothenate kinase of Thermotoga sp. (strain RQ2).